Consider the following 209-residue polypeptide: Small ribosomal subunit protein uS3 (209 aa).

Residues 38-107 enclose the KH type-2 domain; it reads IRKVVKNAYS…RVIVNVEEIK (70 aa).

The protein belongs to the universal ribosomal protein uS3 family. In terms of assembly, part of the 30S ribosomal subunit. Forms a tight complex with proteins S10 and S14.

Its function is as follows. Binds the lower part of the 30S subunit head. Binds mRNA in the 70S ribosome, positioning it for translation. The chain is Small ribosomal subunit protein uS3 from Pseudothermotoga lettingae (strain ATCC BAA-301 / DSM 14385 / NBRC 107922 / TMO) (Thermotoga lettingae).